Here is a 218-residue protein sequence, read N- to C-terminus: Thiopurine S-methyltransferase (218 aa).

4 residues coordinate S-adenosyl-L-methionine: Trp10, Leu45, Glu66, and Arg123.

Belongs to the class I-like SAM-binding methyltransferase superfamily. TPMT family.

The protein resides in the cytoplasm. It catalyses the reaction S-adenosyl-L-methionine + a thiopurine = S-adenosyl-L-homocysteine + a thiopurine S-methylether.. This Pseudomonas fluorescens (strain SBW25) protein is Thiopurine S-methyltransferase.